A 219-amino-acid chain; its full sequence is MNPFRILGDLSHLTSILILIHNIKTTRYIEGISFKTQTLYALVFITRYLDLLTFHWVSLYNALMKIFFIVSTAYIVVLLQGSKRTNTIAYNEMLMHDTFKIQHLLIGSALMSVFFHHKFTFLELAWSFSVWLESVAILPQLYMLSKGGKTRSLTVHYIFAMGLYRALYIPNWIWRYSTEDKKLDKIAFFAGLLQTLLYSDFFYIYYTKVIRGKGFKLPK.

Residues 1-5 lie on the Lumenal side of the membrane; that stretch reads MNPFR. Residues 6–26 form a helical membrane-spanning segment; it reads ILGDLSHLTSILILIHNIKTT. Residues 27–37 are Cytoplasmic-facing; sequence RYIEGISFKTQ. 2 helical membrane-spanning segments follow: residues 38 to 58 and 59 to 79; these read TLYA…HWVS and LYNA…VVLL. Over 80 to 98 the chain is Cytoplasmic; that stretch reads QGSKRTNTIAYNEMLMHDT. A helical transmembrane segment spans residues 99–116; that stretch reads FKIQHLLIGSALMSVFFH. Residues 117–118 lie on the Lumenal side of the membrane; sequence HK. The helical transmembrane segment at 119 to 139 threads the bilayer; the sequence is FTFLELAWSFSVWLESVAILP. Over 140-152 the chain is Cytoplasmic; sequence QLYMLSKGGKTRS. The chain crosses the membrane as a helical span at residues 153-173; it reads LTVHYIFAMGLYRALYIPNWI. Over 174 to 185 the chain is Lumenal; the sequence is WRYSTEDKKLDK. The helical transmembrane segment at 186–206 threads the bilayer; sequence IAFFAGLLQTLLYSDFFYIYY. The Cytoplasmic portion of the chain corresponds to 207 to 219; sequence TKVIRGKGFKLPK.

This sequence belongs to the ERD2 family.

The protein localises to the endoplasmic reticulum membrane. Functionally, required for the retention of luminal endoplasmic reticulum proteins. Determines the specificity of the luminal ER protein retention system. Also required for normal vesicular traffic through the Golgi. This receptor strongly recognizes H-D-E-L and weakly recognizes D-D-E-L and K-D-E-L. The protein is ER lumen protein-retaining receptor of Saccharomyces cerevisiae (strain ATCC 204508 / S288c) (Baker's yeast).